A 228-amino-acid chain; its full sequence is MFSHQDYLSFVNKKNKMNGIDLFKLIPDKAVKIAFFDPQYRGVLDKMSYGNEGKGRGKERAALPQMTDEIIQQFINEFERVLLPNGYLFLWVDKFHLVEGVKPWLENTPSLSVVDMLTWDKQKIGMGYRTRRRSEYLVVIQKEPKKAKITWTLHNIPDVWAEKLQSKPHTHSKPIEMQKQLILATTQEGDLILDPASGGYSVFECCKQTNRNFIGCDLIFGDDENEQD.

The protein belongs to the N(4)/N(6)-methyltransferase family.

The enzyme catalyses a 2'-deoxyadenosine in DNA + S-adenosyl-L-methionine = an N(6)-methyl-2'-deoxyadenosine in DNA + S-adenosyl-L-homocysteine + H(+). Functionally, a beta subtype methylase, recognizes the double-stranded sequence 5'-GANTC-3', methylates A-2 on both strands, and protects the DNA from cleavage by the HhaII endonuclease. This chain is Type II methyltransferase M.HhaII, found in Haemophilus parahaemolyticus.